We begin with the raw amino-acid sequence, 530 residues long: Probable basic-leucine zipper transcription factor L (530 aa).

2 stretches are compositionally biased toward low complexity: residues 1-17 (MYSP…SPES) and 24-39 (SINN…ANQS). Positions 1-76 (MYSPSSPQSS…QSAALSRSRK (76 aa)) are disordered. Residues 55–118 (VKKRQVRLLK…FETKSRLEFL (64 aa)) form the bZIP domain. The basic motif stretch occupies residues 56–77 (KKRQVRLLKNRQSAALSRSRKK). A leucine-zipper region spans residues 83 to 104 (LESKAQELTHSTQELHVQYNKI). 3 disordered regions span residues 142-177 (NNIK…TTPV), 216-258 (SQNK…SPTP), and 389-481 (HHHH…SQIN). Low complexity-rich tracts occupy residues 149 to 176 (RSNS…STTP) and 220 to 247 (NNNN…NTTN). A compositionally biased stretch (polar residues) spans 248 to 257 (LLDQQQQSPT). The segment covering 436–478 (SSSPSSSSTSSPSTSSPSTPKSMGFPSPIFIGSSGSGPSSSGS) has biased composition (low complexity).

It belongs to the bZIP family.

It localises to the nucleus. Functionally, probable transcriptional regulator. The polypeptide is Probable basic-leucine zipper transcription factor L (bzpL) (Dictyostelium discoideum (Social amoeba)).